Here is an 897-residue protein sequence, read N- to C-terminus: Molybdenum import ATP-binding protein ModC 2 (897 aa).

Residues 6-236 (RGRIDAAFRG…PALPLAYSRD (231 aa)) form the ABC transporter domain. 38 to 45 (GPSGCGKT) is a binding site for ATP. The Mop domain maps to 295 to 365 (ESSILNILPA…VKGVSLVRAS (71 aa)). The disordered stretch occupies residues 823-848 (LGDRSVLGPREPDAGAKGRKRQNDPE). The span at 832–848 (REPDAGAKGRKRQNDPE) shows a compositional bias: basic and acidic residues.

The protein belongs to the ABC transporter superfamily. Molybdate importer (TC 3.A.1.8) family. The complex is composed of two ATP-binding proteins (ModC), two transmembrane proteins (ModB) and a solute-binding protein (ModA).

It localises to the cell inner membrane. The enzyme catalyses molybdate(out) + ATP + H2O = molybdate(in) + ADP + phosphate + H(+). In terms of biological role, part of the ABC transporter complex ModABC involved in molybdenum import. Responsible for energy coupling to the transport system. The sequence is that of Molybdenum import ATP-binding protein ModC 2 from Bradyrhizobium diazoefficiens (strain JCM 10833 / BCRC 13528 / IAM 13628 / NBRC 14792 / USDA 110).